Reading from the N-terminus, the 297-residue chain is Homoserine kinase (297 aa).

82-92 is a binding site for ATP; sequence PVSRGLGSSAA.

It belongs to the GHMP kinase family. Homoserine kinase subfamily.

The protein localises to the cytoplasm. It carries out the reaction L-homoserine + ATP = O-phospho-L-homoserine + ADP + H(+). Its pathway is amino-acid biosynthesis; L-threonine biosynthesis; L-threonine from L-aspartate: step 4/5. Its function is as follows. Catalyzes the ATP-dependent phosphorylation of L-homoserine to L-homoserine phosphate. The chain is Homoserine kinase from Clostridium botulinum (strain Kyoto / Type A2).